A 314-amino-acid polypeptide reads, in one-letter code: MHNLRIVFAGTPDFAAKHLQALLNANLQVVAVYTQPDRPAGRGNKLTPSPVKILAVEHNIPVFQPENFKSAEAQQELAALKPDLMVVVAYGLLLPQQVLDTPRLGCINVHGSLLPGWRGAAPIQRAIWAGDPETGITIMQMDAGLDTGDMLHKMVCPITPEDTSASLYEKLAIDGPEGMLFTIQQIADGTAKPEKQNNELATYAKKLSKEEACINWQQDAAFIERCIRAFNPWPVSYFKLADLNIKVWKAEVLPNTAQQSPGMIIQASKAGLDIATGNGMLRIKQLQLPGKKAMSFADVLNARQDLFLQGNILP.

(6S)-5,6,7,8-tetrahydrofolate is bound at residue S112–P115.

This sequence belongs to the Fmt family.

The enzyme catalyses L-methionyl-tRNA(fMet) + (6R)-10-formyltetrahydrofolate = N-formyl-L-methionyl-tRNA(fMet) + (6S)-5,6,7,8-tetrahydrofolate + H(+). Attaches a formyl group to the free amino group of methionyl-tRNA(fMet). The formyl group appears to play a dual role in the initiator identity of N-formylmethionyl-tRNA by promoting its recognition by IF2 and preventing the misappropriation of this tRNA by the elongation apparatus. The polypeptide is Methionyl-tRNA formyltransferase (Tolumonas auensis (strain DSM 9187 / NBRC 110442 / TA 4)).